The chain runs to 149 residues: Flagellar assembly factor FliW (149 aa).

Belongs to the FliW family. Interacts with translational regulator CsrA and flagellin(s).

The protein localises to the cytoplasm. Acts as an anti-CsrA protein, binds CsrA and prevents it from repressing translation of its target genes, one of which is flagellin. Binds to flagellin and participates in the assembly of the flagellum. In Thermotoga sp. (strain RQ2), this protein is Flagellar assembly factor FliW.